The primary structure comprises 39 residues: Cytochrome b559 subunit beta (39 aa).

A helical transmembrane segment spans residues 14–30 (WLAIHGLAVPTVSFLGS). Residue His-18 coordinates heme.

This sequence belongs to the PsbE/PsbF family. Heterodimer of an alpha subunit and a beta subunit. PSII is composed of 1 copy each of membrane proteins PsbA, PsbB, PsbC, PsbD, PsbE, PsbF, PsbH, PsbI, PsbJ, PsbK, PsbL, PsbM, PsbT, PsbX, PsbY, PsbZ, Psb30/Ycf12, at least 3 peripheral proteins of the oxygen-evolving complex and a large number of cofactors. It forms dimeric complexes. Requires heme b as cofactor.

The protein resides in the plastid. It is found in the chloroplast thylakoid membrane. Its function is as follows. This b-type cytochrome is tightly associated with the reaction center of photosystem II (PSII). PSII is a light-driven water:plastoquinone oxidoreductase that uses light energy to abstract electrons from H(2)O, generating O(2) and a proton gradient subsequently used for ATP formation. It consists of a core antenna complex that captures photons, and an electron transfer chain that converts photonic excitation into a charge separation. The chain is Cytochrome b559 subunit beta from Allium textile (Textile onion).